We begin with the raw amino-acid sequence, 139 residues long: Large ribosomal subunit protein uL16 (139 aa).

The protein belongs to the universal ribosomal protein uL16 family. Part of the 50S ribosomal subunit.

Binds 23S rRNA and is also seen to make contacts with the A and possibly P site tRNAs. This Chlorobium phaeobacteroides (strain BS1) protein is Large ribosomal subunit protein uL16.